We begin with the raw amino-acid sequence, 757 residues long: MGSSSSTQHHFAFQNAEKAFKAAALIQRWYRRYMARLEMRRRCTWNIFQSIEYAGQQDQVKLHEFFSYLVDHFTPSSHHERDFLNRMFTEERFAQDVETEEGGDFESIEVPDSYTGPRLSFPLLPDHATALVEAFRLRQQLHARYVLNLLYETRKHLAQLPNINRVSTCYSEEVTVCGDLHGQLDDLIFIFYKNGLPSPERAYVFNGDFVDRGKDSVEVLMVLFAFMLVYPKEFHLNRGNHEDHLVNLRYGFTKEVMHKYKIHGKKILRTLQDVFCWLPLATLVDEKVLVLHGGVSDKTDLELLAKLDRHKIVSTMRCKTRKESENREEQKRKDNQTSSGQKPTPWFLPQSRSLPSSPFHLGSGFKAYKAGRSCSIPCGSPNSKELSRRGQVRRSVDLELEQCRQQAGFLGIREKGESLPLAPDADCVADGGGVLEPTPEEWKQVVDILWSDPAAQEGCKANAVRGGGCYFGPDVTERLMEKYKLQLLIRSHECKPEGYEFCHNRKVLTIFSASNYYEVGSNRGAYVKLGPALTPHIVQYQANKATHRLTMRQRISRVEESALRALRQKLFAHSSDLLVEFRKRDPDESGVITLSDWATAVESVLHLGLPWRMLRPQLVNSSADNVLEYRSWLDSLAKEQLSRENIQSSLLEKLYRNRSNLETIFRIIDSDHSGFISLDEFRQTWKLFSSHMSIDITDDGICDLARSIDFNKDGHIDINEFLEAFRLVEQSCLEGHASACLQSTDTAESGHSSPGPC.

Residues 21–46 (KAAALIQRWYRRYMARLEMRRRCTWN) enclose the IQ domain. A catalytic region spans residues 128-544 (ATALVEAFRL…PHIVQYQANK (417 aa)). The Mn(2+) site is built by D179, H181, D208, and N240. The Proton donor role is filled by H241. H292 contributes to the Mn(2+) binding site. Residues 318-349 (CKTRKESENREEQKRKDNQTSSGQKPTPWFLP) are disordered. The span at 321 to 335 (RKESENREEQKRKDN) shows a compositional bias: basic and acidic residues. H492 provides a ligand contact to Mn(2+). EF-hand domains follow at residues 572–607 (AHSSDLLVEFRKRDPDESGVITLSDWATAVESVLHL), 656–691 (RNRSNLETIFRIIDSDHSGFISLDEFRQTWKLFSSH), and 696–731 (ITDDGICDLARSIDFNKDGHIDINEFLEAFRLVEQS). Ca(2+) contacts are provided by D585, D587, S589, D596, D669, D671, S673, E680, D709, N711, D713, H715, and E720.

It belongs to the PPP phosphatase family. The cofactor is Mn(2+). Detected in retina, more specifically in photoreceptors.

It carries out the reaction O-phospho-L-seryl-[protein] + H2O = L-seryl-[protein] + phosphate. The enzyme catalyses O-phospho-L-threonyl-[protein] + H2O = L-threonyl-[protein] + phosphate. With respect to regulation, activated by calcium. Functionally, may play a role in phototransduction. May dephosphorylate photoactivated rhodopsin. May function as a calcium sensing regulator of ionic currents, energy production or synaptic transmission. In Mus musculus (Mouse), this protein is Serine/threonine-protein phosphatase with EF-hands 2 (Ppef2).